We begin with the raw amino-acid sequence, 33 residues long: Cysteine-rich venom protein (33 aa).

A disordered region spans residues 1-33 (NVDFNSESTRRKKKQKEIVDLHNSLRRRVSPTA). The span at 24–33 (SLRRRVSPTA) shows a compositional bias: basic residues.

Belongs to the CRISP family. Post-translationally, contains 8 disulfide bonds. In terms of tissue distribution, expressed by the venom gland.

The protein resides in the secreted. In terms of biological role, blocks contraction of smooth muscle elicited by high potassium-induced depolarization, but does not block caffeine-stimulated contraction. May target voltage-gated calcium channels on smooth muscle (Cav). This Naja naja (Indian cobra) protein is Cysteine-rich venom protein.